The following is a 148-amino-acid chain: Putative adenylate kinase (148 aa).

Positions 9, 11, 12, 13, and 14 each coordinate ATP. An NMP region spans residues 28–44 (EGNALAVKYGCLSGDEV). Positions 91–101 (DRGYSPEKIDE) are LID. An ATP-binding site is contributed by Arg92.

It belongs to the adenylate kinase family. AK6 subfamily. In terms of assembly, interacts with uS11. Not a structural component of 40S pre-ribosomes, but transiently interacts with them by binding to uS11.

The enzyme catalyses AMP + ATP = 2 ADP. The catalysed reaction is ATP + H2O = ADP + phosphate + H(+). Its function is as follows. Broad-specificity nucleoside monophosphate (NMP) kinase that catalyzes the reversible transfer of the terminal phosphate group between nucleoside triphosphates and monophosphates. Also has ATPase activity. Involved in the late maturation steps of the 30S ribosomal particles, specifically 16S rRNA maturation. While NMP activity is not required for ribosome maturation, ATPase activity is. Associates transiently with small ribosomal subunit protein uS11. ATP hydrolysis breaks the interaction with uS11. May temporarily remove uS11 from the ribosome to enable a conformational change of the ribosomal RNA that is needed for the final maturation step of the small ribosomal subunit. In Thermoplasma acidophilum (strain ATCC 25905 / DSM 1728 / JCM 9062 / NBRC 15155 / AMRC-C165), this protein is Putative adenylate kinase.